Reading from the N-terminus, the 149-residue chain is Nucleoside diphosphate kinase (149 aa).

Residues Lys-9, Phe-57, Arg-85, Thr-91, Arg-102, and Asn-112 each coordinate ATP. His-115 functions as the Pros-phosphohistidine intermediate in the catalytic mechanism.

It belongs to the NDK family. As to quaternary structure, homotetramer. Mg(2+) serves as cofactor.

The protein resides in the cytoplasm. The enzyme catalyses a 2'-deoxyribonucleoside 5'-diphosphate + ATP = a 2'-deoxyribonucleoside 5'-triphosphate + ADP. It carries out the reaction a ribonucleoside 5'-diphosphate + ATP = a ribonucleoside 5'-triphosphate + ADP. Major role in the synthesis of nucleoside triphosphates other than ATP. The ATP gamma phosphate is transferred to the NDP beta phosphate via a ping-pong mechanism, using a phosphorylated active-site intermediate. The protein is Nucleoside diphosphate kinase of Roseiflexus castenholzii (strain DSM 13941 / HLO8).